The sequence spans 347 residues: Cell shape-determining protein MreB (347 aa).

ATP is bound by residues 19 to 21, 165 to 167, 213 to 216, and 295 to 298; these read TAN, GGT, ERIK, and GGAL.

The protein belongs to the FtsA/MreB family. Forms polymers in the presence of ATP. Forms pairs of protofilaments that adopt an antiparallel arrangement and bind to lipids.

The protein resides in the cytoplasm. Functionally, forms membrane-associated dynamic filaments that are essential for cell shape determination. Acts by regulating cell wall synthesis and cell elongation, and thus cell shape. A feedback loop between cell geometry and MreB localization may maintain elongated cell shape by targeting cell wall growth to regions of negative cell wall curvature. Required for mid-cell peptidoglycan synthesis and cell division. Directs the localization of the cytosolic peptidoglycan precursor-synthesizing enzyme MurG. Also required for proper chromosome segregation. Directs the segregation of origin-proximal but not origin-distal loci. The sequence is that of Cell shape-determining protein MreB from Caulobacter vibrioides (strain NA1000 / CB15N) (Caulobacter crescentus).